Consider the following 221-residue polypeptide: Adenylate kinase (221 aa).

10–15 (GAGKGT) contacts ATP. The NMP stretch occupies residues 30–59 (STGDMLRAAVKAGTPLGVEAKKVMDAGGLV). AMP-binding positions include T31, R36, 57 to 59 (GLV), 85 to 88 (GFPR), and Q92. Positions 122–159 (GRRVHVASGRTYHVKYNPPKTEGVDDETGEALIQRDDD) are LID. ATP contacts are provided by residues R123 and 132-133 (TY). AMP is bound by residues R156 and R167. G207 lines the ATP pocket.

The protein belongs to the adenylate kinase family. In terms of assembly, monomer.

The protein localises to the cytoplasm. The catalysed reaction is AMP + ATP = 2 ADP. Its pathway is purine metabolism; AMP biosynthesis via salvage pathway; AMP from ADP: step 1/1. Catalyzes the reversible transfer of the terminal phosphate group between ATP and AMP. Plays an important role in cellular energy homeostasis and in adenine nucleotide metabolism. This chain is Adenylate kinase, found in Cupriavidus necator (strain ATCC 17699 / DSM 428 / KCTC 22496 / NCIMB 10442 / H16 / Stanier 337) (Ralstonia eutropha).